Reading from the N-terminus, the 190-residue chain is uncharacterized protein (190 aa).

The next 4 membrane-spanning stretches (helical) occupy residues 15 to 35, 58 to 78, 94 to 114, and 148 to 168; these read LVMSCSVTLLFSSSLSFVLAI, FSSFFFFFTTSPDSSPVGVLI, FFSASSLYSSIDLGSILYFAF, and FLFFVGSSKAFLTCSSLSFFV.

The protein localises to the membrane. This is an uncharacterized protein from Saccharomyces cerevisiae (strain ATCC 204508 / S288c) (Baker's yeast).